Consider the following 160-residue polypeptide: Probable transcriptional regulator YgiV (160 aa).

Functionally, represses expression of mcbR. This chain is Probable transcriptional regulator YgiV (ygiV), found in Escherichia coli (strain K12).